The chain runs to 109 residues: Large ribosomal subunit protein uL23 (109 aa).

This sequence belongs to the universal ribosomal protein uL23 family. As to quaternary structure, part of the 50S ribosomal subunit. Contacts protein L29, and trigger factor when it is bound to the ribosome.

Functionally, one of the early assembly proteins it binds 23S rRNA. One of the proteins that surrounds the polypeptide exit tunnel on the outside of the ribosome. Forms the main docking site for trigger factor binding to the ribosome. The polypeptide is Large ribosomal subunit protein uL23 (Aquifex pyrophilus).